The primary structure comprises 414 residues: Alanine--glyoxylate aminotransferase (414 aa).

The transit peptide at 1 to 23 (MFRMLAKASVTLGSRAAGWVRTM) directs the protein to the mitochondrion. The residue at position 231 (Lys-231) is an N6-(pyridoxal phosphate)lysine. Position 247 is an N6-acetyllysine; alternate (Lys-247). Lys-247 is modified (N6-succinyllysine; alternate). Lys-256 is modified (N6-acetyllysine). At Lys-330 the chain carries N6-acetyllysine; alternate. Lys-330 bears the N6-succinyllysine; alternate mark. Position 334 is an N6-acetyllysine (Lys-334). Residue Arg-382 participates in substrate binding. The Microbody targeting signal motif lies at 412–414 (NKL).

The protein belongs to the class-V pyridoxal-phosphate-dependent aminotransferase family. As to quaternary structure, homodimer. Pyridoxal 5'-phosphate serves as cofactor.

It is found in the peroxisome. The protein resides in the mitochondrion matrix. It carries out the reaction L-serine + pyruvate = 3-hydroxypyruvate + L-alanine. The catalysed reaction is glyoxylate + L-alanine = glycine + pyruvate. Functionally, catalyzes the transamination of glyoxylate to glycine and contributes to the glyoxylate detoxification. Its function is as follows. Catalyzes the transamination between L-serine and pyruvate and weakly contributes to gluconeogenesis from the L-serine metabolism. This Mus musculus (Mouse) protein is Alanine--glyoxylate aminotransferase.